Here is a 611-residue protein sequence, read N- to C-terminus: Pseudomonine synthase PmsE (611 aa).

Residues Val533 to Gln608 form the Carrier domain. The residue at position 569 (Ser569) is an O-(pantetheine 4'-phosphoryl)serine.

This sequence belongs to the ATP-dependent AMP-binding enzyme family. It depends on pantetheine 4'-phosphate as a cofactor.

The catalysed reaction is salicylate + holo-[ACP] + ATP = salicyl-[ACP] + AMP + diphosphate. It participates in siderophore biosynthesis; pseudomonine biosynthesis. Involved in the biosynthesis of the siderophore pseudomonine. Specifically adenylates salicylate and loads it onto its peptidyl carrier domain, via a thioester linkage to the phosphopanthetheine moiety. The protein is Pseudomonine synthase PmsE of Pseudomonas entomophila (strain L48).